Consider the following 283-residue polypeptide: NifU-like protein 4, mitochondrial (283 aa).

A mitochondrion-targeting transit peptide spans 1-48 (MKGIARLVTSLSRIGGRKVVSGTSTVTSSSSSSLLLSRRSLFISATNL).

This sequence belongs to the NifU family. Predominantly expressed in roots.

Its subcellular location is the mitochondrion. In terms of biological role, molecular scaffold for [Fe-S] cluster assembly of mitochondrial iron-sulfur proteins. This is NifU-like protein 4, mitochondrial (NIFU4) from Arabidopsis thaliana (Mouse-ear cress).